A 541-amino-acid polypeptide reads, in one-letter code: Transcription termination factor MTERF4, chloroplastic (541 aa).

A chloroplast-targeting transit peptide spans 1-45; that stretch reads MKIRFCNGFTKPGFLLVHFEPPSFFAVRSRSLSDSTYGNLCNHKK. Disordered stretches follow at residues 66–103 and 503–541; these read SRSL…SLYS and EVET…EEFA. Over residues 85–99 the composition is skewed to basic and acidic residues; sequence GRDRDRDKDKGRDSK. Positions 507–517 are enriched in polar residues; that stretch reads DPSSFDMNTLM. The segment covering 521–541 has biased composition (acidic residues); that stretch reads REEESDSEYEEEEDDDDEEFA.

It belongs to the mTERF family.

The protein localises to the plastid. The protein resides in the chloroplast. It localises to the mitochondrion. In terms of biological role, transcription termination factor required for processing and steady-state levels of plastid transcripts. Required for splicing of the chloroplastic Clp protease (ClpP) group IIa intron. Required for maturation of 16S rRNA and 23S rRNA in the chloroplast. Essential for embryogenesis. Required for the maintenance of the correct levels of transcripts in the mitochondria and chloroplasts. The protein is Transcription termination factor MTERF4, chloroplastic of Arabidopsis thaliana (Mouse-ear cress).